A 371-amino-acid polypeptide reads, in one-letter code: MASVTLKNVCKAYGDVLISKNVDLEINEGEFVVFVGPSGCGKSTLLRCIAGLEDITSGDLYIGEERMNDVEPSKRGVGMVFQSYALYPHLNLYDNMSFGLKLAKADKKEIDKRVEQAAEILQLGHLLERLPKALSGGQRQRVAIGRTLVSQPKVFLLDEPLSNLDAALRVQMRAQITKLQRQLGCTMIYVTHDQVEAMTMADKIVVLDGGFVSQVGKPLELYHYPENRFVAGFIGSPKMNFMSVQIVDVESERVQVKLSNGVTFWVPVDGTTVNKGDRMSLGVRPEHLVSSAQGDAVIDGEVMIVEKLGNETQVYLNLESADADVIYRQPDTLDVDSGDRLEIGIPAHRCHLFHSDGRACKRLFNEKGVER.

The region spanning Val-4–Ile-234 is the ABC transporter domain. ATP is bound at residue Gly-36 to Ser-43.

Belongs to the ABC transporter superfamily. Maltooligosaccharide importer (TC 3.A.1.1.1) family. In terms of assembly, the complex is composed of two ATP-binding proteins (MalK), two transmembrane proteins (MalG and MalK) and a solute-binding protein (MalE).

The protein localises to the cell inner membrane. It catalyses the reaction D-maltose(out) + ATP + H2O = D-maltose(in) + ADP + phosphate + H(+). Part of the ABC transporter complex MalEFGK involved in maltose/maltodextrin import. Responsible for energy coupling to the transport system. The chain is Maltose/maltodextrin import ATP-binding protein MalK from Vibrio vulnificus (strain CMCP6).